Here is a 122-residue protein sequence, read N- to C-terminus: Large ribosomal subunit protein bL12 (122 aa).

It belongs to the bacterial ribosomal protein bL12 family. As to quaternary structure, homodimer. Part of the ribosomal stalk of the 50S ribosomal subunit. Forms a multimeric L10(L12)X complex, where L10 forms an elongated spine to which 2 to 4 L12 dimers bind in a sequential fashion. Binds GTP-bound translation factors.

Its function is as follows. Forms part of the ribosomal stalk which helps the ribosome interact with GTP-bound translation factors. Is thus essential for accurate translation. The polypeptide is Large ribosomal subunit protein bL12 (Staphylococcus epidermidis (strain ATCC 35984 / DSM 28319 / BCRC 17069 / CCUG 31568 / BM 3577 / RP62A)).